The chain runs to 242 residues: tRNA pseudouridine synthase A (242 aa).

Asp-51 (nucleophile) is an active-site residue. Tyr-107 serves as a coordination point for substrate.

Belongs to the tRNA pseudouridine synthase TruA family. In terms of assembly, homodimer.

The enzyme catalyses uridine(38/39/40) in tRNA = pseudouridine(38/39/40) in tRNA. Functionally, formation of pseudouridine at positions 38, 39 and 40 in the anticodon stem and loop of transfer RNAs. The polypeptide is tRNA pseudouridine synthase A (Helicobacter pylori (strain Shi470)).